The chain runs to 763 residues: MDLRTMTQSLVTLAEDNMAFFSSQGPGETARRLSNVFAGVREQALGLEPALGSLLSVAHLFDLDPETPANGYRSLVHTARCCLAHLLHKSRYVASNRRSIFFRTSHNLAELEAYLAALTQLRALAYYAQRLLATNRPGGLFFEGDEGLTADFLREYVTLHKGCFYGRCLGFQFTPSIRPFLQTISIGLVSFGEHYKRNESGLGVTASSLFTSGRFAIDPELRGAEFERITQNLDVHFWKAFWNITEIEVLSSLANMASATVRVSRLISLPPEAFEMPLTSDPKLTVTISPPLAHTGPGPVLIRLISYDLREGQDSEELNSMVKSEGPRILELRPRPQQTSRSRSLVVXFHGGGFVAQTSKSHEPYLKSWAQELGAPIISIDYSLAPEAPFPRALEECFFAYCWAVKHCALLGSTGERICLAGDSAGGNLCFTVALRAAAYGVRVPDGIMAAYPATMLQSAASPSRLLSLMDPLLPLSVLSKCVSAYAGAETEEHPNSDEKALGMMGLVRRDTSLLLRDLRLGASSWLNSFLEFSGQKSQKTSAPTVESMRRSVSEAALAQPEGPVGTDSLKILTLKDLNLKSSSETSETPEMSLSVETLGPSTPSDVNFFLRPEDAREEAEAKEGLSAKDGSSRVSNAFPEGFHPRRTSQGATQMPLYSSPIVKNPFMSPLLAPDNMLKTLPPVHIVACALDPMLDDSXMFARRLRALGQPVTLRVVEDLPHGFLSLASLCRETRQAAELCVERIRLILTPPAAAAAAAPPPL.

An Involved in the stabilization of the negatively charged intermediate by the formation of the oxyanion hole motif is present at residues 350–352 (HGG). Residue Ser-424 is part of the active site. Ser-552 bears the Phosphoserine mark. A Phosphoserine; by AMPK modification is found at Ser-554. Phosphoserine occurs at positions 595, 627, and 649. The segment covering 616–627 (AREEAEAKEGLS) has biased composition (basic and acidic residues). The interval 616–652 (AREEAEAKEGLSAKDGSSRVSNAFPEGFHPRRTSQGA) is disordered. Active-site residues include Asp-692 and His-722.

Belongs to the 'GDXG' lipolytic enzyme family. As to quaternary structure, monomer and homodimer. Interacts with CAVIN1 in the adipocyte cytoplasm. Interacts with PLIN5. Phosphorylation by AMPK reduces its translocation towards the lipid droplets.

It is found in the cell membrane. It localises to the membrane. The protein resides in the caveola. The protein localises to the cytoplasm. Its subcellular location is the cytosol. It is found in the lipid droplet. The enzyme catalyses a diacylglycerol + H2O = a monoacylglycerol + a fatty acid + H(+). The catalysed reaction is a triacylglycerol + H2O = a diacylglycerol + a fatty acid + H(+). It catalyses the reaction a monoacylglycerol + H2O = glycerol + a fatty acid + H(+). It carries out the reaction Hydrolyzes glycerol monoesters of long-chain fatty acids.. The enzyme catalyses 1,2-di-(9Z-octadecenoyl)-glycerol + (9Z)-octadecenoate + H(+) = 1,2,3-tri-(9Z-octadecenoyl)-glycerol + H2O. The catalysed reaction is 2,3-di-(9Z)-octadecenoyl-sn-glycerol + H2O = 2-(9Z-octadecenoyl)-glycerol + (9Z)-octadecenoate + H(+). It catalyses the reaction cholesteryl (9Z-octadecenoate) + H2O = cholesterol + (9Z)-octadecenoate + H(+). It carries out the reaction 1,2,3-tri-(9Z-octadecenoyl)-glycerol + H2O = di-(9Z)-octadecenoylglycerol + (9Z)-octadecenoate + H(+). The enzyme catalyses all-trans-retinyl hexadecanoate + H2O = all-trans-retinol + hexadecanoate + H(+). The catalysed reaction is 1,2-di-(9Z-octadecenoyl)-glycerol + H2O = (9Z-octadecenoyl)-glycerol + (9Z)-octadecenoate + H(+). It catalyses the reaction 2-(5Z,8Z,11Z,14Z-eicosatetraenoyl)-glycerol + H2O = glycerol + (5Z,8Z,11Z,14Z)-eicosatetraenoate + H(+). It carries out the reaction 1-(9Z-octadecenoyl)-glycerol + H2O = glycerol + (9Z)-octadecenoate + H(+). The enzyme catalyses 2-(9Z-octadecenoyl)-glycerol + H2O = glycerol + (9Z)-octadecenoate + H(+). The catalysed reaction is 1-O-hexadecyl-2-acetyl-sn-glycerol + H2O = 1-O-hexadecyl-sn-glycerol + acetate + H(+). It catalyses the reaction 1,2-di-(9Z-octadecenoyl)-sn-glycerol + H2O = (9Z-octadecenoyl)-glycerol + (9Z)-octadecenoate + H(+). It carries out the reaction 1,3-di-(9Z-octadecenoyl)-glycerol + H2O = 1-(9Z-octadecenoyl)-glycerol + (9Z)-octadecenoate + H(+). The enzyme catalyses 1,2-di-(9Z-octadecenoyl)-glycerol + H2O = 2-(9Z-octadecenoyl)-glycerol + (9Z)-octadecenoate + H(+). Its pathway is glycerolipid metabolism; triacylglycerol degradation. Lipase with broad substrate specificity, catalyzing the hydrolysis of triacylglycerols (TAGs), diacylglycerols (DAGs), monoacylglycerols (MAGs), cholesteryl esters and retinyl esters. Shows a preferential hydrolysis of DAGs over TAGs and MAGs. Preferentially hydrolyzes fatty acid (FA) esters at the sn-3 position of the glycerol backbone in DAGs and FA esters at the sn-1 and sn-2 positions of the glycerol backbone in TAGs. Catalyzes the hydrolysis of 2-arachidonoylglycerol, an endocannabinoid and of 2-acetyl monoalkylglycerol ether, the penultimate precursor of the pathway for de novo synthesis of platelet-activating factor. In adipose tissue and heart, it primarily hydrolyzes stored triglycerides to free fatty acids, while in steroidogenic tissues, it principally converts cholesteryl esters to free cholesterol for steroid hormone production. This chain is Hormone-sensitive lipase (LIPE), found in Ictidomys tridecemlineatus (Thirteen-lined ground squirrel).